The sequence spans 258 residues: Imidazole glycerol phosphate synthase subunit HisF (258 aa).

Catalysis depends on residues aspartate 11 and aspartate 130.

This sequence belongs to the HisA/HisF family. In terms of assembly, heterodimer of HisH and HisF.

It is found in the cytoplasm. The catalysed reaction is 5-[(5-phospho-1-deoxy-D-ribulos-1-ylimino)methylamino]-1-(5-phospho-beta-D-ribosyl)imidazole-4-carboxamide + L-glutamine = D-erythro-1-(imidazol-4-yl)glycerol 3-phosphate + 5-amino-1-(5-phospho-beta-D-ribosyl)imidazole-4-carboxamide + L-glutamate + H(+). The protein operates within amino-acid biosynthesis; L-histidine biosynthesis; L-histidine from 5-phospho-alpha-D-ribose 1-diphosphate: step 5/9. Its function is as follows. IGPS catalyzes the conversion of PRFAR and glutamine to IGP, AICAR and glutamate. The HisF subunit catalyzes the cyclization activity that produces IGP and AICAR from PRFAR using the ammonia provided by the HisH subunit. This Bradyrhizobium sp. (strain BTAi1 / ATCC BAA-1182) protein is Imidazole glycerol phosphate synthase subunit HisF.